A 370-amino-acid chain; its full sequence is Pantothenate kinase 3 (370 aa).

Glu-138 (proton acceptor) is an active-site residue. The acetyl-CoA site is built by Ser-192, Ser-195, and Arg-207.

It belongs to the type II pantothenate kinase family. As to quaternary structure, homodimer.

Its subcellular location is the cytoplasm. The catalysed reaction is (R)-pantothenate + ATP = (R)-4'-phosphopantothenate + ADP + H(+). It functions in the pathway cofactor biosynthesis; coenzyme A biosynthesis; CoA from (R)-pantothenate: step 1/5. Its activity is regulated as follows. Subject to allosteric regulation, exists in two distinct conformational states, a catalytically incompetent (or open) conformation stabilized by the binding of acetyl(acyl)-CoA, and a catalytically competent (or closed) conformation stabilized by ATP-binding. Inhibited by acetyl-CoA and its thioesters which act as allosteric inhibitors and compete with the ATP-binding site. Functionally, catalyzes the phosphorylation of pantothenate to generate 4'-phosphopantothenate in the first and rate-determining step of coenzyme A (CoA) synthesis. The protein is Pantothenate kinase 3 (PANK3) of Bos taurus (Bovine).